The primary structure comprises 160 residues: Nucleotide-binding protein ASA_3207 (160 aa).

The protein belongs to the YajQ family.

Nucleotide-binding protein. The polypeptide is Nucleotide-binding protein ASA_3207 (Aeromonas salmonicida (strain A449)).